The sequence spans 501 residues: Ribose import ATP-binding protein RbsA (501 aa).

2 consecutive ABC transporter domains span residues 5 to 241 (LSLE…VGRK) and 252 to 498 (LRND…TGGV). 37–44 (GENGAGKS) provides a ligand contact to ATP.

The protein belongs to the ABC transporter superfamily. Ribose importer (TC 3.A.1.2.1) family. As to quaternary structure, the complex is composed of an ATP-binding protein (RbsA), two transmembrane proteins (RbsC) and a solute-binding protein (RbsB).

Its subcellular location is the cell inner membrane. It carries out the reaction D-ribose(out) + ATP + H2O = D-ribose(in) + ADP + phosphate + H(+). Functionally, part of the ABC transporter complex RbsABC involved in ribose import. Responsible for energy coupling to the transport system. This chain is Ribose import ATP-binding protein RbsA, found in Hahella chejuensis (strain KCTC 2396).